A 358-amino-acid chain; its full sequence is UPF0575 protein C19orf67 (358 aa).

The disordered stretch occupies residues 1–84; it reads MATEQWFEGS…PGPAPPRLSL (84 aa). 2 stretches are compositionally biased toward pro residues: residues 17 to 32 and 70 to 80; these read ETPP…PPCG and PLVPRPGPAPP.

Belongs to the UPF0575 family.

This is UPF0575 protein C19orf67 (C19orf67) from Homo sapiens (Human).